We begin with the raw amino-acid sequence, 212 residues long: Adenylate kinase (212 aa).

Glycine 10–threonine 15 lines the ATP pocket. The NMP stretch occupies residues serine 30–valine 59. AMP is bound by residues threonine 31, arginine 36, glutamate 57–valine 59, glycine 84–arginine 87, and glutamine 91. An LID region spans residues arginine 125 to aspartate 158. ATP contacts are provided by residues arginine 126 and threonine 135–tyrosine 136. 2 residues coordinate AMP: arginine 155 and arginine 166. Residue glycine 194 coordinates ATP.

It belongs to the adenylate kinase family. Monomer.

It localises to the cytoplasm. It catalyses the reaction AMP + ATP = 2 ADP. The protein operates within purine metabolism; AMP biosynthesis via salvage pathway; AMP from ADP: step 1/1. Functionally, catalyzes the reversible transfer of the terminal phosphate group between ATP and AMP. Plays an important role in cellular energy homeostasis and in adenine nucleotide metabolism. The chain is Adenylate kinase from Salinibacter ruber (strain DSM 13855 / M31).